Here is a 291-residue protein sequence, read N- to C-terminus: Protease HtpX homolog (291 aa).

The next 2 membrane-spanning stretches (helical) occupy residues 4 to 24 and 39 to 59; these read ILLF…VASL and GSLL…SLLI. Zn(2+) is bound at residue His-144. Residue Glu-145 is part of the active site. His-148 is a binding site for Zn(2+). Helical transmembrane passes span 159–179 and 199–219; these read LIQG…AFAI and ITTV…VAWF. Glu-224 serves as a coordination point for Zn(2+).

This sequence belongs to the peptidase M48B family. Requires Zn(2+) as cofactor.

It localises to the cell inner membrane. This is Protease HtpX homolog from Albidiferax ferrireducens (strain ATCC BAA-621 / DSM 15236 / T118) (Rhodoferax ferrireducens).